The sequence spans 342 residues: MSLITSTSPHATVKNNTGAFMRQVIYATLPGLAVLTWQFGWGSVINVLWAVIVALVSEALFLKARGRNIAFYLKDYSAVVTAVLLGLALPPTAPWWLTLVGVSFAIIVAKQLYGGLGMNPFNPAMVGYVLLLISFPVAMTQWLAPGEPLSLLQSWQLFTGQLPVDGLSGATPLDTFRTVHSAGASSEIELASHSILHGQFAGLGWEWVNLAFLLGGLYLISRKIITWHIPAGFLAGLGLPALLAWLIDPVRFADPLFQLFSGGAMLGAFFIATDPVSAATSRMGRLVYALLIGVLIWVIRTFGGYPDAVAFSVLLLNLSAPFIDYYTQPRTYGHKSSNRGTN.

3 helical membrane passes run 42–62, 68–90, and 124–144; these read GSVI…ALFL, NIAF…LALP, and AMVG…QWLA. FMN phosphoryl threonine is present on T171. Helical transmembrane passes span 200 to 220, 227 to 247, 252 to 272, 286 to 306, and 308 to 328; these read FAGL…LYLI, WHIP…AWLI, FADP…FFIA, LVYA…GGYP, and AVAF…YYTQ.

Belongs to the NqrB/RnfD family. The complex is composed of six subunits: RnfA, RnfB, RnfC, RnfD, RnfE and RnfG. The cofactor is FMN.

It is found in the cell inner membrane. Its function is as follows. Part of a membrane-bound complex that couples electron transfer with translocation of ions across the membrane. This is Ion-translocating oxidoreductase complex subunit D from Alcanivorax borkumensis (strain ATCC 700651 / DSM 11573 / NCIMB 13689 / SK2).